Consider the following 227-residue polypeptide: Phosphoribosylformylglycinamidine synthase subunit PurQ (227 aa).

The 225-residue stretch at 3–227 folds into the Glutamine amidotransferase type-1 domain; that stretch reads FAVCVFPGSN…LMLWYSLLSD (225 aa). Cysteine 86 (nucleophile) is an active-site residue. Catalysis depends on residues histidine 203 and glutamate 205.

As to quaternary structure, part of the FGAM synthase complex composed of 1 PurL, 1 PurQ and 2 PurS subunits.

The protein localises to the cytoplasm. It carries out the reaction N(2)-formyl-N(1)-(5-phospho-beta-D-ribosyl)glycinamide + L-glutamine + ATP + H2O = 2-formamido-N(1)-(5-O-phospho-beta-D-ribosyl)acetamidine + L-glutamate + ADP + phosphate + H(+). It catalyses the reaction L-glutamine + H2O = L-glutamate + NH4(+). The protein operates within purine metabolism; IMP biosynthesis via de novo pathway; 5-amino-1-(5-phospho-D-ribosyl)imidazole from N(2)-formyl-N(1)-(5-phospho-D-ribosyl)glycinamide: step 1/2. In terms of biological role, part of the phosphoribosylformylglycinamidine synthase complex involved in the purines biosynthetic pathway. Catalyzes the ATP-dependent conversion of formylglycinamide ribonucleotide (FGAR) and glutamine to yield formylglycinamidine ribonucleotide (FGAM) and glutamate. The FGAM synthase complex is composed of three subunits. PurQ produces an ammonia molecule by converting glutamine to glutamate. PurL transfers the ammonia molecule to FGAR to form FGAM in an ATP-dependent manner. PurS interacts with PurQ and PurL and is thought to assist in the transfer of the ammonia molecule from PurQ to PurL. The chain is Phosphoribosylformylglycinamidine synthase subunit PurQ from Aquifex aeolicus (strain VF5).